The chain runs to 638 residues: Chaperone protein DnaK (638 aa).

At Thr-198 the chain carries Phosphothreonine; by autocatalysis. The disordered stretch occupies residues 598-638 (YEASQKEAAEADAKADAAKDSDVVDADFEEIDEDDDKKKSA). Basic and acidic residues predominate over residues 601-619 (SQKEAAEADAKADAAKDSD). A compositionally biased stretch (acidic residues) spans 620–632 (VVDADFEEIDEDD).

It belongs to the heat shock protein 70 family.

Its function is as follows. Acts as a chaperone. The chain is Chaperone protein DnaK from Mesorhizobium japonicum (strain LMG 29417 / CECT 9101 / MAFF 303099) (Mesorhizobium loti (strain MAFF 303099)).